The chain runs to 355 residues: C-C chemokine receptor type 3 (355 aa).

The Extracellular portion of the chain corresponds to 1–34; it reads MTTSLDTVETFGPTSYDDDMGLLCEKADVGALIA. Residues 35 to 62 traverse the membrane as a helical segment; it reads QFVPPLYSLVFMVGLLGNVVVVMILIKY. At 63–72 the chain is on the cytoplasmic side; that stretch reads RRLRIMTNIY. Residues 73 to 93 form a helical membrane-spanning segment; the sequence is LLNLAISDLLFLFTLPFWIHY. At 94–107 the chain is on the extracellular side; that stretch reads VRERNWVFSHGMCK. An intrachain disulfide couples Cys-106 to Cys-183. The helical transmembrane segment at 108–129 threads the bilayer; that stretch reads VLSGFYHTGLYSEIFFIILLTI. Residues 130–146 lie on the Cytoplasmic side of the membrane; it reads DRYLAIVHAVFALRART. Residues 147-171 traverse the membrane as a helical segment; it reads VTFGVITSIVTWGLAVLAALPEFIF. Residues 172-203 lie on the Extracellular side of the membrane; that stretch reads YGTEKLFPKTLCSAIYPQDTVYSWRHFHTLKM. The helical transmembrane segment at 204-223 threads the bilayer; sequence TILCLALPLLVMAICYTGII. Topologically, residues 224 to 239 are cytoplasmic; it reads KTLLRCPSKKKYKAIR. Residues 240–264 form a helical membrane-spanning segment; it reads LIFVIMAVFFIFWTPYNVAILISTY. Topologically, residues 265–281 are extracellular; it reads QSVLFGLDCERSKHLDL. A helical transmembrane segment spans residues 282-305; it reads FVLATEVIAYSHCCVNPVIYAFVG. Over 306 to 355 the chain is Cytoplasmic; it reads ERFRKYLRHFFHRHVLMHLGKYIPFLPSEKLERTSSVSPSTAEPELSIVF.

This sequence belongs to the G-protein coupled receptor 1 family.

It is found in the cell membrane. Receptor for C-C type chemokine. Binds and responds to a variety of chemokines, including CCL11, CCL26, CCL7, CCL13, RANTES(CCL5) and CCL15. Subsequently transduces a signal by increasing the intracellular calcium ions level. In addition acts as a possible functional receptor for NARS1. This chain is C-C chemokine receptor type 3 (CCR3), found in Macaca mulatta (Rhesus macaque).